The chain runs to 271 residues: Phosphatidylglycerol--prolipoprotein diacylglyceryl transferase (271 aa).

4 helical membrane passes run 18–38 (LSVHWYGIIIGAGALLGLWMA), 51–71 (IFIDLVLFAIPIAIICARAYY), 89–109 (IWKGGIAIHGGLIGAIATGIV), and 115–135 (GISFWKLADIAAPSILLGQAI). Residue arginine 137 participates in a 1,2-diacyl-sn-glycero-3-phospho-(1'-sn-glycerol) binding. The next 3 membrane-spanning stretches (helical) occupy residues 177–197 (HPTFLYESLWSFAGVVILLLL), 205–225 (GNLFLTYVIWYSIGRYFIEGM), and 236–256 (LRIAQVISIVLIVLAIILMIF).

The protein belongs to the Lgt family.

The protein resides in the cell membrane. It catalyses the reaction L-cysteinyl-[prolipoprotein] + a 1,2-diacyl-sn-glycero-3-phospho-(1'-sn-glycerol) = an S-1,2-diacyl-sn-glyceryl-L-cysteinyl-[prolipoprotein] + sn-glycerol 1-phosphate + H(+). It participates in protein modification; lipoprotein biosynthesis (diacylglyceryl transfer). Catalyzes the transfer of the diacylglyceryl group from phosphatidylglycerol to the sulfhydryl group of the N-terminal cysteine of a prolipoprotein, the first step in the formation of mature lipoproteins. This chain is Phosphatidylglycerol--prolipoprotein diacylglyceryl transferase, found in Bacillus velezensis (strain DSM 23117 / BGSC 10A6 / LMG 26770 / FZB42) (Bacillus amyloliquefaciens subsp. plantarum).